A 469-amino-acid polypeptide reads, in one-letter code: Maintenance of mitochondrial morphology protein 1 (469 aa).

At 1 to 25 the chain is on the lumenal side; the sequence is MADEVPTAVPLATPAGSSSLSFTQG. The chain crosses the membrane as a helical span at residues 26–46; sequence FLLGQLSIAILIFCFIKFFIF. Over 47–469 the chain is Cytoplasmic; it reads GEPPSADDRA…GMRWRGALPR (423 aa). The 240-residue stretch at 124–363 folds into the SMP-LTD domain; the sequence is QPESLDWFNV…EPRFQQIVLP (240 aa). Residues 266–299 show a composition bias toward low complexity; that stretch reads SSSPPSTTAPMPSPTSNTHRSSSPSRPASSSGAP. Disordered stretches follow at residues 266–304 and 426–469; these read SSSPPSTTAPMPSPTSNTHRSSSPSRPASSSGAPPHRPT and EAEG…ALPR. 2 stretches are compositionally biased toward basic and acidic residues: residues 426–439 and 449–462; these read EAEGAKMREAEIRA and ERSRGRDDRADGMR.

It belongs to the MMM1 family. Homodimer. Component of the ER-mitochondria encounter structure (ERMES) or MDM complex, composed of mmm1, MDM10, MDM12 and MDM34. A mmm1 homodimer associates with one molecule of MDM12 on each side in a pairwise head-to-tail manner, and the SMP-LTD domains of mmm1 and MDM12 generate a continuous hydrophobic tunnel for phospholipid trafficking.

It is found in the endoplasmic reticulum membrane. Its function is as follows. Component of the ERMES/MDM complex, which serves as a molecular tether to connect the endoplasmic reticulum (ER) and mitochondria. Components of this complex are involved in the control of mitochondrial shape and protein biogenesis, and function in nonvesicular lipid trafficking between the ER and mitochondria. The MDM12-mmm1 subcomplex functions in the major beta-barrel assembly pathway that is responsible for biogenesis of all outer membrane beta-barrel proteins, and acts in a late step after the SAM complex. The MDM10-MDM12-mmm1 subcomplex further acts in the TOM40-specific pathway after the action of the MDM12-mmm1 complex. Essential for establishing and maintaining the structure of mitochondria and maintenance of mtDNA nucleoids. This is Maintenance of mitochondrial morphology protein 1 from Pyrenophora tritici-repentis (strain Pt-1C-BFP) (Wheat tan spot fungus).